The chain runs to 114 residues: MRTLLIGMIWVYQKVISPLKRPTCRYYPSCSEYALWLFSYSNFWYALLFSLRRILRCNSLFEGGIDYPIISKRITPIFGSPRLIKVWLVPLCPQKDWSAKGKFYLIKSMKVVQC.

It belongs to the UPF0161 family.

The protein resides in the cell inner membrane. Could be involved in insertion of integral membrane proteins into the membrane. The chain is Putative membrane protein insertion efficiency factor from Wolinella succinogenes (strain ATCC 29543 / DSM 1740 / CCUG 13145 / JCM 31913 / LMG 7466 / NCTC 11488 / FDC 602W) (Vibrio succinogenes).